We begin with the raw amino-acid sequence, 278 residues long: Large ribosomal subunit protein uL2 (278 aa).

Composition is skewed to basic residues over residues 210–219 and 252–263; these read RSRWLGKRPQ and KKSRGIKTRNSK. A disordered region spans residues 210 to 278; sequence RSRWLGKRPQ…LIIRHRKGNK (69 aa).

This sequence belongs to the universal ribosomal protein uL2 family. In terms of assembly, part of the 50S ribosomal subunit. Forms a bridge to the 30S subunit in the 70S ribosome.

In terms of biological role, one of the primary rRNA binding proteins. Required for association of the 30S and 50S subunits to form the 70S ribosome, for tRNA binding and peptide bond formation. It has been suggested to have peptidyltransferase activity; this is somewhat controversial. Makes several contacts with the 16S rRNA in the 70S ribosome. The chain is Large ribosomal subunit protein uL2 from Lactobacillus johnsonii (strain CNCM I-12250 / La1 / NCC 533).